The following is an 81-amino-acid chain: Styelin-E (81 aa).

The N-terminal stretch at 1 to 22 (MQMKATILIVLVALFMIQQSEA) is a signal peptide. Trp24 carries the 6'-bromotryptophan modification. Arg26 is subject to 3,4-dihydroxyarginine. 3 positions are modified to 4,5-dihydroxylysine: Lys27, Lys30, and Lys34. 3',4'-dihydroxyphenylalanine occurs at positions 36 and 37. Lys38 is subject to 4,5-dihydroxylysine. Lys40 bears the 5-hydroxylysine mark. Residues Tyr41 and Tyr42 each carry the 3',4'-dihydroxyphenylalanine modification. Lys44 carries the 5-hydroxylysine modification. Leu54 is modified (leucine amide). Positions 56–81 (DMTDEEFQDFMKEVEQAREEELQSRQ) are cleaved as a propeptide — removed in mature form.

Post-translationally, contains L-DOPA (3',4'-dihydroxyphenylalanine). As to expression, hemocytes and pharyngeal tissues.

Its subcellular location is the secreted. Bactericidal against several Gram-positive and Gram-negative bacteria. This chain is Styelin-E, found in Styela clava (Sea squirt).